The chain runs to 182 residues: UPF0398 protein lwe1908 (182 aa).

It belongs to the UPF0398 family.

The sequence is that of UPF0398 protein lwe1908 from Listeria welshimeri serovar 6b (strain ATCC 35897 / DSM 20650 / CCUG 15529 / CIP 8149 / NCTC 11857 / SLCC 5334 / V8).